We begin with the raw amino-acid sequence, 203 residues long: Probable GTP-binding protein EngB (203 aa).

The region spanning 21-196 is the EngB-type G domain; the sequence is GAPEIAFLGR…WKKIFEAAGT (176 aa). GTP is bound by residues 29–36, 55–59, 79–82, 146–149, and 175–177; these read GRSNVGKS, GRTQT, DLPG, TKID, and FSA. Residues Ser36 and Thr57 each contribute to the Mg(2+) site.

The protein belongs to the TRAFAC class TrmE-Era-EngA-EngB-Septin-like GTPase superfamily. EngB GTPase family. Mg(2+) is required as a cofactor.

In terms of biological role, necessary for normal cell division and for the maintenance of normal septation. The chain is Probable GTP-binding protein EngB from Koribacter versatilis (strain Ellin345).